We begin with the raw amino-acid sequence, 375 residues long: Putative glutamate--cysteine ligase 2 (375 aa).

Belongs to the glutamate--cysteine ligase type 2 family. YbdK subfamily.

The catalysed reaction is L-cysteine + L-glutamate + ATP = gamma-L-glutamyl-L-cysteine + ADP + phosphate + H(+). Functionally, ATP-dependent carboxylate-amine ligase which exhibits weak glutamate--cysteine ligase activity. This is Putative glutamate--cysteine ligase 2 from Sorangium cellulosum (strain So ce56) (Polyangium cellulosum (strain So ce56)).